A 304-amino-acid polypeptide reads, in one-letter code: Dihydroorotate dehydrogenase B (NAD(+)), catalytic subunit (304 aa).

FMN-binding positions include S22 and K46–G47. Substrate contacts are provided by residues K46 and N70–L74. FMN is bound by residues N100 and N128. N128 is a binding site for substrate. C131 acts as the Nucleophile in catalysis. 2 residues coordinate FMN: K166 and I192. N193 to T194 contributes to the substrate binding site. FMN contacts are provided by residues G218, G244–G245, and G266–T267.

It belongs to the dihydroorotate dehydrogenase family. Type 1 subfamily. Heterotetramer of 2 PyrK and 2 PyrD type B subunits. However, the metal reductase complex seems to be composed of a heterooctamer of 4 PyrK and 4 PyrD subunits. Requires FMN as cofactor.

Its subcellular location is the cytoplasm. It catalyses the reaction (S)-dihydroorotate + NAD(+) = orotate + NADH + H(+). Its pathway is pyrimidine metabolism; UMP biosynthesis via de novo pathway; orotate from (S)-dihydroorotate (NAD(+) route): step 1/1. Catalyzes the conversion of dihydroorotate to orotate with NAD(+) as electron acceptor. In terms of biological role, together with PyrK, also forms a metal reductase complex able to reduce Fe(III)-chelates to Fe(II)-chelates, as well as soluble Cr(VI) and U(VI), using NADH as electron donor. To a lesser extent, can also use NADPH as an electron donor. Is unable to reduce riboflavin and FMN with NADH as electron donor. May have an in vivo role in metal reduction in D.reducens, which is an organism capable of reducing contaminant heavy metals and radionuclides. The chain is Dihydroorotate dehydrogenase B (NAD(+)), catalytic subunit (pyrD) from Desulforamulus reducens (strain ATCC BAA-1160 / DSM 100696 / MI-1) (Desulfotomaculum reducens).